The sequence spans 461 residues: MGEMASLRSHKNGIIFILDIVLFFVLLNVLPFEPKANSGLALLAFIAVLWLSEALHVTITALLVPLLAVALGLVSTKQALVGFADPTIFLFFGGFSLATALHIQKLDKLIANKIMALARGNLFIAVIYLFLITAFLSMWMSNTATAAMMLPLAMGILSQLDREKDHNTYVFVLLGIAYSASIGGMGTLVGSPPNAIVASNLNLTFSDWLWYGLPIMIILLPLMIGILYIIFKPKLHLNFEQTFENIEMNPMRILTFIIFPVIALTWIFSGKINPFISGLLGLQKNIASFDSIVALLAAIVICSTGVASWKQIQSNTDWGVLMLFGGGLTLSAVLKDSGASKILADSIVFMIDGQHFYLIGLLVAAFIIFLTEFTSNTASAALLVPIFISIAQSLGMPEIGLALIIGIGASCAFMLPVATPPNAIVFGSGQVKQSEMVKVGFLLNLVCVVVIATMGYMFWLK.

13 consecutive transmembrane segments (helical) span residues 13–33 (GIIF…LPFE), 54–74 (ALHV…LGLV), 81–101 (VGFA…ATAL), 120–140 (GNLF…SMWM), 170–190 (VFVL…TLVG), 211–231 (YGLP…YIIF), 256–276 (FIIF…NPFI), 286–306 (IASF…STGV), 314–334 (SNTD…SAVL), 349–369 (FMID…FIIF), 377–397 (TASA…LGMP), 399–419 (IGLA…PVAT), and 439–459 (VGFL…YMFW).

Belongs to the SLC13A/DASS transporter (TC 2.A.47) family. NADC subfamily.

The protein resides in the cell membrane. This is an uncharacterized protein from Haemophilus influenzae (strain ATCC 51907 / DSM 11121 / KW20 / Rd).